We begin with the raw amino-acid sequence, 600 residues long: Probable methyltransferase PMT7 (600 aa).

At 1–15 (MGGGYVLFGSARSGQ) the chain is on the cytoplasmic side. The chain crosses the membrane as a helical; Signal-anchor for type II membrane protein span at residues 16 to 36 (MIMVALVLMVGSFYAGSIFGN). Residues 37-600 (NSPIYISQPS…FCRKKFWAIL (564 aa)) are Lumenal-facing. 9 N-linked (GlcNAc...) asparagine glycosylation sites follow: Asn49, Asn98, Asn110, Asn157, Asn200, Asn204, Asn334, Asn447, and Asn484.

The protein belongs to the methyltransferase superfamily.

Its subcellular location is the golgi apparatus membrane. In Arabidopsis thaliana (Mouse-ear cress), this protein is Probable methyltransferase PMT7.